A 66-amino-acid polypeptide reads, in one-letter code: Large ribosomal subunit protein uL29 (66 aa).

Belongs to the universal ribosomal protein uL29 family.

The chain is Large ribosomal subunit protein uL29 from Lysinibacillus sphaericus (strain C3-41).